A 207-amino-acid polypeptide reads, in one-letter code: Suppressor of IKBKE 1 (207 aa).

2 coiled-coil regions span residues 70 to 102 and 164 to 192; these read HILL…DALE and CKVQ…ESLQ.

Belongs to the SIKE family. As to quaternary structure, interacts with IKBKE and TBK1 via its coiled coil region. Interaction with TBK1 is disrupted upon viral infection or TLR3 stimulation. Interacts with CDC42BPB. Interacts with SIKE1 which mediates association with the STRIPAK core complex composed of PP2A catalytic and scaffolding subunits, the striatins (PP2A regulatory subunits), the striatin-associated proteins MOB4, STRIP1 and STRIP2, PDCD10 and members of the STE20 kinases, such as STK24 and STK26.

The protein localises to the cytoplasm. In terms of biological role, physiological suppressor of IKK-epsilon and TBK1 that plays an inhibitory role in virus- and TLR3-triggered IRF3. Inhibits TLR3-mediated activation of interferon-stimulated response elements (ISRE) and the IFN-beta promoter. May act by disrupting the interactions of IKBKE or TBK1 with TICAM1/TRIF, IRF3 and RIGI. Does not inhibit NF-kappa-B activation pathways. Associates with the striatin-interacting phosphatase and kinase (STRIPAK) core complex, forming the extended (SIKE1:SLMAP)STRIPAK complex. The (SIKE1:SLMAP)STRIPAK complex dephosphorylates STK3 leading to the inhibition of Hippo signaling and the control of cell growth. This chain is Suppressor of IKBKE 1 (Sike1), found in Mus musculus (Mouse).